The sequence spans 45 residues: Large ribosomal subunit protein bL34 (45 aa).

Residues 1 to 45 (MTKRTFQPNNRRRARKHGFRARMRTRAGRAILSARRGKNRAELSA) form a disordered region. Over residues 10–27 (NRRRARKHGFRARMRTRA) the composition is skewed to basic residues.

Belongs to the bacterial ribosomal protein bL34 family.

This chain is Large ribosomal subunit protein bL34, found in Micrococcus luteus (strain ATCC 4698 / DSM 20030 / JCM 1464 / CCM 169 / CCUG 5858 / IAM 1056 / NBRC 3333 / NCIMB 9278 / NCTC 2665 / VKM Ac-2230) (Micrococcus lysodeikticus).